Reading from the N-terminus, the 377-residue chain is Probable pectin lyase D (377 aa).

Residues 1–17 (MRVSAFALLAAAATAAA) form the signal peptide. Intrachain disulfides connect Cys80-Cys99 and Cys89-Cys223. An N-linked (GlcNAc...) asparagine glycan is attached at Asn126. The active site involves Arg253. An intrachain disulfide couples Cys321 to Cys329.

The protein belongs to the polysaccharide lyase 1 family.

The protein localises to the secreted. It catalyses the reaction Eliminative cleavage of (1-&gt;4)-alpha-D-galacturonan methyl ester to give oligosaccharides with 4-deoxy-6-O-methyl-alpha-D-galact-4-enuronosyl groups at their non-reducing ends.. In terms of biological role, pectinolytic enzymes consist of four classes of enzymes: pectin lyase, polygalacturonase, pectin methylesterase and rhamnogalacturonase. Among pectinolytic enzymes, pectin lyase is the most important in depolymerization of pectin, since it cleaves internal glycosidic bonds of highly methylated pectins. In Emericella nidulans (strain FGSC A4 / ATCC 38163 / CBS 112.46 / NRRL 194 / M139) (Aspergillus nidulans), this protein is Probable pectin lyase D (pelD).